We begin with the raw amino-acid sequence, 405 residues long: Imidazolonepropionase (405 aa).

Fe(3+) is bound by residues His-73 and His-75. Zn(2+) is bound by residues His-73 and His-75. Positions 82, 145, and 178 each coordinate 4-imidazolone-5-propanoate. Tyr-145 is a binding site for N-formimidoyl-L-glutamate. His-243 serves as a coordination point for Fe(3+). His-243 lines the Zn(2+) pocket. Gln-246 is a binding site for 4-imidazolone-5-propanoate. Asp-318 serves as a coordination point for Fe(3+). A Zn(2+)-binding site is contributed by Asp-318. N-formimidoyl-L-glutamate is bound by residues Asn-320 and Gly-322. Thr-323 is a binding site for 4-imidazolone-5-propanoate.

It belongs to the metallo-dependent hydrolases superfamily. HutI family. Zn(2+) serves as cofactor. It depends on Fe(3+) as a cofactor.

The protein localises to the cytoplasm. The enzyme catalyses 4-imidazolone-5-propanoate + H2O = N-formimidoyl-L-glutamate. The protein operates within amino-acid degradation; L-histidine degradation into L-glutamate; N-formimidoyl-L-glutamate from L-histidine: step 3/3. Its function is as follows. Catalyzes the hydrolytic cleavage of the carbon-nitrogen bond in imidazolone-5-propanoate to yield N-formimidoyl-L-glutamate. It is the third step in the universal histidine degradation pathway. The chain is Imidazolonepropionase from Brucella anthropi (strain ATCC 49188 / DSM 6882 / CCUG 24695 / JCM 21032 / LMG 3331 / NBRC 15819 / NCTC 12168 / Alc 37) (Ochrobactrum anthropi).